Reading from the N-terminus, the 170-residue chain is ATP synthase subunit b (170 aa).

Residues 15–37 (LNLFETNVLNWAVVVFGLYKFLP) traverse the membrane as a helical segment.

The protein belongs to the ATPase B chain family. F-type ATPases have 2 components, F(1) - the catalytic core - and F(0) - the membrane proton channel. F(1) has five subunits: alpha(3), beta(3), gamma(1), delta(1), epsilon(1). F(0) has four main subunits: a(1), b(1), b'(1) and c(10-14). The alpha and beta chains form an alternating ring which encloses part of the gamma chain. F(1) is attached to F(0) by a central stalk formed by the gamma and epsilon chains, while a peripheral stalk is formed by the delta, b and b' chains.

Its subcellular location is the cellular thylakoid membrane. F(1)F(0) ATP synthase produces ATP from ADP in the presence of a proton or sodium gradient. F-type ATPases consist of two structural domains, F(1) containing the extramembraneous catalytic core and F(0) containing the membrane proton channel, linked together by a central stalk and a peripheral stalk. During catalysis, ATP synthesis in the catalytic domain of F(1) is coupled via a rotary mechanism of the central stalk subunits to proton translocation. Functionally, component of the F(0) channel, it forms part of the peripheral stalk, linking F(1) to F(0). This is ATP synthase subunit b from Prochlorococcus marinus (strain MIT 9515).